The primary structure comprises 57 residues: Protein Ric1 (57 aa).

The next 2 helical transmembrane spans lie at 8-28 and 34-54; these read IPRLICSVIIPPVGVFFQVGC and INCLLTVLGYIPGVIHAVYIL.

Belongs to the UPF0057 (PMP3) family.

The protein resides in the membrane. The sequence is that of Protein Ric1 (RIC1) from Phytophthora infestans (Potato late blight agent).